The sequence spans 1359 residues: Junctional cadherin 5-associated protein (1359 aa).

9 disordered regions span residues 1-147, 249-411, 454-554, 591-813, 840-1076, 1105-1141, 1157-1207, 1225-1260, and 1276-1359; these read MYSV…SLPV, PLNE…PAHP, NSSP…TCET, SHLP…CNSK, KELQ…TIEI, RAGQ…PRVS, PLFV…KDVE, SVAG…DRLM, and FRNA…VERV. Over residues 15-28 the composition is skewed to basic and acidic residues; that stretch reads LSRDPPASREDNPK. Polar residues-rich tracts occupy residues 82–91 and 98–112; these read PQSTSASRTS and QPPS…TGND. Over residues 120-135 the composition is skewed to basic and acidic residues; that stretch reads RQEARSQKPREHENLE. Over residues 302–321 the composition is skewed to low complexity; the sequence is QQSRGGADSSDSQDSQQMDA. Over residues 335–353 the composition is skewed to pro residues; the sequence is LEPPVYVPPPSYRSPPQNI. Residues 539–554 show a composition bias toward polar residues; sequence RQVSSPYSQGESTCET. The segment covering 591 to 613 has biased composition (basic and acidic residues); that stretch reads SHLPDRDMDNNDLKPSADQKNGS. Polar residues-rich tracts occupy residues 619–632, 689–704, and 756–773; these read LQEQ…STDL, QQTQ…SSQL, and LSPS…SVDQ. Low complexity predominate over residues 849–859; it reads SSSSSSSSSSS. Basic and acidic residues predominate over residues 868-880; it reads QENRAHCRQEDVG. The segment covering 1003–1013 has biased composition (polar residues); the sequence is PKITSAFSSVK. Residues serine 1044 and serine 1050 each carry the phosphoserine modification. Phosphoserine is present on serine 1194. Serine 1281 is modified (phosphoserine). Residues 1324 to 1342 are compositionally biased toward basic and acidic residues; it reads SISREEKEHPAAQKEKSMD.

The protein localises to the cell junction. It localises to the adherens junction. This is Junctional cadherin 5-associated protein from Homo sapiens (Human).